The chain runs to 441 residues: Xaa-Pro dipeptidase (441 aa).

Aspartate 244, aspartate 255, histidine 336, glutamate 381, and glutamate 420 together coordinate Mn(2+).

This sequence belongs to the peptidase M24B family. Bacterial-type prolidase subfamily. Requires Mn(2+) as cofactor.

The catalysed reaction is Xaa-L-Pro dipeptide + H2O = an L-alpha-amino acid + L-proline. Functionally, splits dipeptides with a prolyl residue in the C-terminal position. This is Xaa-Pro dipeptidase from Xanthomonas euvesicatoria pv. vesicatoria (strain 85-10) (Xanthomonas campestris pv. vesicatoria).